The sequence spans 21 residues: Endo-1,4-beta-xylanase A (21 aa).

It belongs to the glycosyl hydrolase 10 (cellulase F) family.

The enzyme catalyses Endohydrolysis of (1-&gt;4)-beta-D-xylosidic linkages in xylans.. It participates in glycan degradation; xylan degradation. The polypeptide is Endo-1,4-beta-xylanase A (Dictyoglomus sp. (strain B4A)).